Here is a 288-residue protein sequence, read N- to C-terminus: Acetyl-coenzyme A carboxylase carboxyl transferase subunit beta (288 aa).

One can recognise a CoA carboxyltransferase N-terminal domain in the interval 34–288; it reads LFAKCPACKH…HLVAFHGGGQ (255 aa). 4 residues coordinate Zn(2+): Cys-38, Cys-41, Cys-56, and Cys-59. The C4-type zinc finger occupies 38 to 59; it reads CPACKHMIYKKDLGLAKICPTC.

This sequence belongs to the AccD/PCCB family. Acetyl-CoA carboxylase is a heterohexamer composed of biotin carboxyl carrier protein (AccB), biotin carboxylase (AccC) and two subunits each of ACCase subunit alpha (AccA) and ACCase subunit beta (AccD). Zn(2+) is required as a cofactor.

It is found in the cytoplasm. It catalyses the reaction N(6)-carboxybiotinyl-L-lysyl-[protein] + acetyl-CoA = N(6)-biotinyl-L-lysyl-[protein] + malonyl-CoA. It participates in lipid metabolism; malonyl-CoA biosynthesis; malonyl-CoA from acetyl-CoA: step 1/1. Component of the acetyl coenzyme A carboxylase (ACC) complex. Biotin carboxylase (BC) catalyzes the carboxylation of biotin on its carrier protein (BCCP) and then the CO(2) group is transferred by the transcarboxylase to acetyl-CoA to form malonyl-CoA. The chain is Acetyl-coenzyme A carboxylase carboxyl transferase subunit beta from Streptococcus pyogenes serotype M3 (strain ATCC BAA-595 / MGAS315).